The sequence spans 62 residues: Defensin BmKDfsin4 (62 aa).

Residues 1-24 (MKTIVLLFVLALVFCTLEMGIVEA) form the signal peptide. 3 disulfide bridges follow: C28–C49, C35–C57, and C39–C59.

The protein belongs to the invertebrate defensin family. Type 2 subfamily.

The protein resides in the secreted. Functionally, dual-function peptide with antimicrobial and potassium channel-blocking activities. Shows inhibitory activity against Gram-positive bacteria such as S.aureus, B.subtilis, and M.luteus as well as methicillin-resistant S.aureus (MIC=0.1-20 uM). Does not act on bacteria by disrupting membranes. Also moderately inhibits Kv1.1/KCNA1 (25.2% inhibition at 1 uM), Kv1.2/KCNA2 (30.5% inhibition at 1 uM), and Kv1.3/KCNA3 potassium channels (IC(50)=510.2 nM, 61% inhibition at 1 uM). Inhibits potassium channels by interacting with the pore region. Does not show hemolytic activity. In vitro, dose-dependently decreases the production of Hepatitis B virus (HBV) DNA and HBV viral proteins in both culture medium and cell lysate. This Olivierus martensii (Manchurian scorpion) protein is Defensin BmKDfsin4.